Reading from the N-terminus, the 875-residue chain is DNA mismatch repair protein MutS (875 aa).

625–632 is a binding site for ATP; sequence GPNMGGKS.

The protein belongs to the DNA mismatch repair MutS family.

This protein is involved in the repair of mismatches in DNA. It is possible that it carries out the mismatch recognition step. This protein has a weak ATPase activity. In Symbiobacterium thermophilum (strain DSM 24528 / JCM 14929 / IAM 14863 / T), this protein is DNA mismatch repair protein MutS.